The following is a 446-amino-acid chain: Phosphoglucosamine mutase (446 aa).

The Phosphoserine intermediate role is filled by Ser-101. Positions 101, 240, 242, and 244 each coordinate Mg(2+). At Ser-101 the chain carries Phosphoserine.

This sequence belongs to the phosphohexose mutase family. Mg(2+) serves as cofactor. In terms of processing, activated by phosphorylation.

The catalysed reaction is alpha-D-glucosamine 1-phosphate = D-glucosamine 6-phosphate. Catalyzes the conversion of glucosamine-6-phosphate to glucosamine-1-phosphate. The polypeptide is Phosphoglucosamine mutase (Pseudomonas putida (strain ATCC 700007 / DSM 6899 / JCM 31910 / BCRC 17059 / LMG 24140 / F1)).